Reading from the N-terminus, the 306-residue chain is Polyisoprenyl-teichoic acid--peptidoglycan teichoic acid transferase TagU (306 aa).

Over 1–11 (MRAEKRKKKKK) the chain is Cytoplasmic. Residues 12 to 32 (ILYTIIALIGIFVLSTGSYAY) traverse the membrane as a helical; Signal-anchor for type II membrane protein segment. The Extracellular segment spans residues 33–306 (YLWHKAASTV…TAELKESLNK (274 aa)).

The protein belongs to the LytR/CpsA/Psr (LCP) family.

The protein localises to the cell membrane. It functions in the pathway cell wall biogenesis. In terms of biological role, may catalyze the final step in cell wall teichoic acid biosynthesis, the transfer of the anionic cell wall polymers (APs) from their lipid-linked precursor to the cell wall peptidoglycan (PG). This is Polyisoprenyl-teichoic acid--peptidoglycan teichoic acid transferase TagU from Bacillus licheniformis (strain ATCC 14580 / DSM 13 / JCM 2505 / CCUG 7422 / NBRC 12200 / NCIMB 9375 / NCTC 10341 / NRRL NRS-1264 / Gibson 46).